The primary structure comprises 187 residues: EP300-interacting inhibitor of differentiation 1 (187 aa).

Positions 1-118 are disordered; that stretch reads MSEMAELSEL…YDYPEEEQLS (118 aa). Acidic residues-rich tracts occupy residues 52 to 63 and 93 to 116; these read LEEEGPMEEEEA and FESEDEGEEFDDWEDDYDYPEEEQ. The interaction with NR0B2 stretch occupies residues 54 to 120; it reads EEGPMEEEEA…YPEEEQLSGA (67 aa). An LXCXE motif motif is present at residues 178–182; sequence LGCDE.

As to quaternary structure, interacts via its LXCXE motif with the entire pocket region of RB1. Interacts with EP300, NR0B2 and TRIM27. In terms of processing, ubiquitinated in U2OS osteosarcoma cells and is rapidly degraded by proteasome as cells exit the cell cycle exit. Widely expressed. Most abundantly expressed in heart, skeletal muscle, pancreas, brain and testis. Expressed at much lower levels in placenta and peripheral blood leukocyte. Barely detectable in lung. Also weakly expressed in lung carcinoma A-549 and various leukemia cell lines.

The protein resides in the nucleus. The protein localises to the cytoplasm. Its function is as follows. Interacts with RB1 and EP300 and acts as a repressor of MYOD1 transactivation. Inhibits EP300 and CBP histone acetyltransferase activity. May be involved in coupling cell cycle exit to the transcriptional activation of genes required for cellular differentiation. May act as a candidate coinhibitory factor for NR0B2 that can be directly linked to transcription inhibitory mechanisms. The polypeptide is EP300-interacting inhibitor of differentiation 1 (Homo sapiens (Human)).